A 429-amino-acid chain; its full sequence is Tol-Pal system protein TolB (429 aa).

Residues 1-21 form the signal peptide; the sequence is MKPVFKMLLSLLILWTSLLHA.

This sequence belongs to the TolB family. The Tol-Pal system is composed of five core proteins: the inner membrane proteins TolA, TolQ and TolR, the periplasmic protein TolB and the outer membrane protein Pal. They form a network linking the inner and outer membranes and the peptidoglycan layer.

The protein localises to the periplasm. Part of the Tol-Pal system, which plays a role in outer membrane invagination during cell division and is important for maintaining outer membrane integrity. TolB occupies a key intermediary position in the Tol-Pal system because it communicates directly with both membrane-embedded components, Pal in the outer membrane and TolA in the inner membrane. The sequence is that of Tol-Pal system protein TolB from Hamiltonella defensa subsp. Acyrthosiphon pisum (strain 5AT).